The following is a 481-amino-acid chain: Endoplasmic reticulum lectin 1 (481 aa).

A signal peptide spans 1–27 (MRRSDRLRCAGASLLVVLCGVFRSSFG). MRH domains are found at residues 108–245 (SSCS…LCNH) and 340–467 (SYCF…ICKI). Cystine bridges form between cysteine 110/cysteine 123, cysteine 198/cysteine 231, cysteine 214/cysteine 243, cysteine 342/cysteine 355, cysteine 419/cysteine 453, and cysteine 434/cysteine 465.

The protein localises to the endoplasmic reticulum lumen. Its function is as follows. Probable lectin that binds selectively to improperly folded lumenal proteins. May function in endoplasmic reticulum quality control and endoplasmic reticulum-associated degradation (ERAD) of both non-glycosylated proteins and glycoproteins. The sequence is that of Endoplasmic reticulum lectin 1 (erlec1) from Xenopus tropicalis (Western clawed frog).